Consider the following 349-residue polypeptide: tRNA uridine(34) hydroxylase (349 aa).

Residues 146 to 240 (DDPDAVFIDM…YARKAREQGL (95 aa)) form the Rhodanese domain. Cys-200 serves as the catalytic Cysteine persulfide intermediate. Positions 314 to 328 (PEEEQRRRRAGRENG) are enriched in basic and acidic residues. Residues 314–349 (PEEEQRRRRAGRENGNKIFNKSRGRLNTTLGIPDPE) are disordered.

It belongs to the TrhO family.

It carries out the reaction uridine(34) in tRNA + AH2 + O2 = 5-hydroxyuridine(34) in tRNA + A + H2O. Functionally, catalyzes oxygen-dependent 5-hydroxyuridine (ho5U) modification at position 34 in tRNAs. In Cronobacter sakazakii (strain ATCC BAA-894) (Enterobacter sakazakii), this protein is tRNA uridine(34) hydroxylase.